The primary structure comprises 1178 residues: Mediator of RNA polymerase II transcription subunit 14 (1178 aa).

Residues Met1–Thr12 show a composition bias toward polar residues. 2 disordered regions span residues Met1–Val50 and Leu1064–Asp1178. 2 stretches are compositionally biased toward low complexity: residues Pro1074–Ala1112 and His1119–Arg1164.

This sequence belongs to the Mediator complex subunit 14 family. In terms of assembly, component of the Mediator complex.

The protein resides in the nucleus. In terms of biological role, component of the Mediator complex, a coactivator involved in the regulated transcription of nearly all RNA polymerase II-dependent genes. Mediator functions as a bridge to convey information from gene-specific regulatory proteins to the basal RNA polymerase II transcription machinery. Mediator is recruited to promoters by direct interactions with regulatory proteins and serves as a scaffold for the assembly of a functional preinitiation complex with RNA polymerase II and the general transcription factors. The sequence is that of Mediator of RNA polymerase II transcription subunit 14 (RGR1) from Chaetomium globosum (strain ATCC 6205 / CBS 148.51 / DSM 1962 / NBRC 6347 / NRRL 1970) (Soil fungus).